Consider the following 268-residue polypeptide: Putative F-box protein At3g23420 (268 aa).

Residues 5–51 enclose the F-box domain; that stretch reads PRDLSDLPRNMAEEVLSRVPMTSLRRLRFTCKKWNTLSRCRSFAKKH.

This Arabidopsis thaliana (Mouse-ear cress) protein is Putative F-box protein At3g23420.